The sequence spans 499 residues: Gypsy retrotransposon integrase-like protein 1 (499 aa).

The Integrase catalytic domain occupies 113–270 (KVENPWSIVT…TPYFQMFNRN (158 aa)).

The polypeptide is Gypsy retrotransposon integrase-like protein 1 (GIN1) (Bos taurus (Bovine)).